The chain runs to 111 residues: HTH-type transcriptional regulator SinR (111 aa).

An HTH cro/C1-type domain is found at 6–61 (IKQYRKEKGYSLSELAEKAGVAKSYLSSIERNLQTNPSIQFLEKVSAVLDVSVHTL). The H-T-H motif DNA-binding region spans 17-36 (LSELAEKAGVAKSYLSSIER). One can recognise a Sin domain in the interval 65 to 103 (KDETEYDGQLDSEWENLVRDAMASGVSKKQFREFLDYQK).

As to quaternary structure, homotetramer. Also associates with SinI.

Functionally, affects autolysin level and flagellation. This chain is HTH-type transcriptional regulator SinR (sinR), found in Bacillus licheniformis.